Here is a 479-residue protein sequence, read N- to C-terminus: MLAETQLAPIAVIGDVMVDRYITGSVSRISPEAPVPVLVHGAERIVPGGAANVAANAAALGAPVLLVGLVGEDEAASQLADALATYPGISLAHMVVDAKRPTITKTRVMSGRQQIVRIDAEVTRACDAAEEAALIGAAEAAIAKAGVVVLSDYAKGVLSDAVIAAAMAAAKARNVPVIVDPKRRTFEAYRGATLVTPNRRELAEATGLPDETDADAARAAEAAGRQFGGDVLVTRAEKGMTLWRQDGRVLHVPAEAREVFDVSGAGDTALAALAVSLAGGQSLEASVGIANAAAALAVAKLGTAVVTRAELRAALERTAAQIAPPGALVSREDACAVVAAWKAQGLRVVFTNGCFDLVHPGHVSLLEQSAAQGDRLVVALNTDASVRRLKGPSRPLQDEQARARVMGAMRCVDLVVLFDEETPLETIKALLPDVLVKGADYAPHEVVGADVVTANGGELVLVDLVAGKSTSSLVAKART.

Positions 1-322 (MLAETQLAPI…AALERTAAQI (322 aa)) are ribokinase. 198-201 (NRRE) contacts ATP. Asp267 is an active-site residue. The tract at residues 350 to 479 (FTNGCFDLVH…TSSLVAKART (130 aa)) is cytidylyltransferase.

It in the N-terminal section; belongs to the carbohydrate kinase PfkB family. The protein in the C-terminal section; belongs to the cytidylyltransferase family. In terms of assembly, homodimer.

It catalyses the reaction D-glycero-beta-D-manno-heptose 7-phosphate + ATP = D-glycero-beta-D-manno-heptose 1,7-bisphosphate + ADP + H(+). The enzyme catalyses D-glycero-beta-D-manno-heptose 1-phosphate + ATP + H(+) = ADP-D-glycero-beta-D-manno-heptose + diphosphate. It functions in the pathway nucleotide-sugar biosynthesis; ADP-L-glycero-beta-D-manno-heptose biosynthesis; ADP-L-glycero-beta-D-manno-heptose from D-glycero-beta-D-manno-heptose 7-phosphate: step 1/4. The protein operates within nucleotide-sugar biosynthesis; ADP-L-glycero-beta-D-manno-heptose biosynthesis; ADP-L-glycero-beta-D-manno-heptose from D-glycero-beta-D-manno-heptose 7-phosphate: step 3/4. Catalyzes the phosphorylation of D-glycero-D-manno-heptose 7-phosphate at the C-1 position to selectively form D-glycero-beta-D-manno-heptose-1,7-bisphosphate. Its function is as follows. Catalyzes the ADP transfer from ATP to D-glycero-beta-D-manno-heptose 1-phosphate, yielding ADP-D-glycero-beta-D-manno-heptose. In Azorhizobium caulinodans (strain ATCC 43989 / DSM 5975 / JCM 20966 / LMG 6465 / NBRC 14845 / NCIMB 13405 / ORS 571), this protein is Bifunctional protein HldE.